Consider the following 109-residue polypeptide: Large ribosomal subunit protein eL30 (109 aa).

It belongs to the eukaryotic ribosomal protein eL30 family.

The chain is Large ribosomal subunit protein eL30 (RPL30) from Yarrowia lipolytica (strain CLIB 122 / E 150) (Yeast).